The chain runs to 261 residues: Carboxy-terminal domain RNA polymerase II polypeptide A small phosphatase 1 (261 aa).

Met1 carries the post-translational modification N-acetylmethionine. Polar residues predominate over residues Met1 to Ile10. Residues Met1–Pro33 form a disordered region. Residues Ser11 to Gln25 are compositionally biased toward basic and acidic residues. The FCP1 homology domain occupies Gln86–Leu244. Catalysis depends on Asp96, which acts as the 4-aspartylphosphate intermediate. Residues Asp96, Asp98, and Asn207 each contribute to the Mg(2+) site. Residue Asp98 is the Proton donor of the active site.

Monomer. Interacts with GTF2F1. Interacts with REST. Mg(2+) is required as a cofactor. In terms of tissue distribution, expression is restricted to non-neuronal tissues. Highest expression in skeletal muscle, spleen, lung and placenta.

It is found in the nucleus. The enzyme catalyses O-phospho-L-seryl-[protein] + H2O = L-seryl-[protein] + phosphate. It carries out the reaction O-phospho-L-threonyl-[protein] + H2O = L-threonyl-[protein] + phosphate. Its activity is regulated as follows. Stimulated by GTF2F1. Inhibited by beryllofluoride anions. Functionally, preferentially catalyzes the dephosphorylation of 'Ser-5' within the tandem 7 residue repeats in the C-terminal domain (CTD) of the largest RNA polymerase II subunit POLR2A. Negatively regulates RNA polymerase II transcription, possibly by controlling the transition from initiation/capping to processive transcript elongation. Recruited by REST to neuronal genes that contain RE-1 elements, leading to neuronal gene silencing in non-neuronal cells. This is Carboxy-terminal domain RNA polymerase II polypeptide A small phosphatase 1 (CTDSP1) from Homo sapiens (Human).